The following is a 511-amino-acid chain: MSSSTESLPGTLRRTLTTSRAPAATSSQRLKAGYFVSNAFLPRVKANGIHDSASSQRSTTVASTTSTTADAADGSSSTTQPTTAADLPPVDNTLLPHRRRQAQRKAAAAAAAAAANGETPTPLINPDAPTADLAPDASSQLAAAAASAPADSLKRRLSSLLSLSKPRLTVLVVLSAMVPYALYPVPSFLTSSALDTSLAPSLSPLTLLFLTTGTTLCSASANALNMLYEPDTDSKMTRTRTRPLVRRLLTTKAAVLFAVGCGLAGTLALYFGVNPTVSFLGAANIALYAGAYTPLKRISAVNTWVGAIVGGIPPLMGWAAAAGESATGDGTWRELLFASDGSSLGGWLFAGLLFAWQFPHFMPLSWGIRHEYKAAGLRMLAWTNPARNGRVALRYSLAFIPLCVGLSATGVTEWSFAVTSLPVNAWLVWEAIKFWRLEGHKGSARGLFWASVWHLPVIMVLALAQKKGMWGRVWRSVFGEPEEEEGEWVYEDEDEEEGGGVGEVVKGVVKK.

The transit peptide at 1 to 23 (MSSSTESLPGTLRRTLTTSRAPA) directs the protein to the mitochondrion. 2 disordered regions span residues 1-27 (MSSS…ATSS) and 50-136 (HDSA…LAPD). Composition is skewed to low complexity over residues 52–79 (SASS…SSTT), 104–115 (RKAAAAAAAAAA), and 126–136 (PDAPTADLAPD). A run of 8 helical transmembrane segments spans residues 168–188 (LTVL…VPSF), 197–217 (SLAP…TTLC), 253–273 (AAVL…YFGV), 275–295 (PTVS…YTPL), 303–323 (TWVG…AAAG), 344–364 (LGGW…FMPL), 398–418 (AFIP…SFAV), and 444–464 (ARGL…LALA).

It belongs to the UbiA prenyltransferase family.

The protein localises to the mitochondrion membrane. Its function is as follows. Converts protoheme IX and farnesyl diphosphate to heme O. The polypeptide is Protoheme IX farnesyltransferase, mitochondrial (pft-1) (Neurospora crassa (strain ATCC 24698 / 74-OR23-1A / CBS 708.71 / DSM 1257 / FGSC 987)).